The chain runs to 237 residues: Ribitol-5-phosphate cytidylyltransferase (237 aa).

Residues 7–10 (LAGG) and 80–86 (GEDRNET) contribute to the CTP site.

This sequence belongs to the IspD/TarI cytidylyltransferase family. TarI subfamily.

The catalysed reaction is D-ribitol 5-phosphate + CTP + H(+) = CDP-L-ribitol + diphosphate. It participates in cell wall biogenesis; poly(ribitol phosphate) teichoic acid biosynthesis. Catalyzes the transfer of the cytidylyl group of CTP to D-ribitol 5-phosphate. The chain is Ribitol-5-phosphate cytidylyltransferase from Listeria innocua serovar 6a (strain ATCC BAA-680 / CLIP 11262).